The primary structure comprises 565 residues: Thiol:disulfide interchange protein DsbD (565 aa).

Residues 1-19 form the signal peptide; the sequence is MAQRIFTLILLLCSTSVFA. 2 disulfides stabilise this stretch: Cys-122–Cys-128 and Cys-182–Cys-304. 7 helical membrane-spanning segments follow: residues 163–183, 208–228, 243–263, 296–316, 323–343, 357–377, and 384–404; these read LPFSALWALLIGIGIAFTPCV, LLTFIYVQGMALTYTALGLVV, YVLIGLAIVFTLLAMSMFGLF, IAGLICSPCTTAPLSAILLYI, WLGGGTLYLYALGMGLPLMLI, WMEQVKTAFGFVILALPVFLL, and VWGLRLWSALGVAFFGWAFIT. In terms of domain architecture, Thioredoxin spans 434 to 565; the sequence is WAFGATHTAQ…FSAHLRDRQP (132 aa). A disulfide bond links Cys-480 and Cys-483.

It belongs to the thioredoxin family. DsbD subfamily.

The protein localises to the cell inner membrane. The enzyme catalyses [protein]-dithiol + NAD(+) = [protein]-disulfide + NADH + H(+). It carries out the reaction [protein]-dithiol + NADP(+) = [protein]-disulfide + NADPH + H(+). Functionally, required to facilitate the formation of correct disulfide bonds in some periplasmic proteins and for the assembly of the periplasmic c-type cytochromes. Acts by transferring electrons from cytoplasmic thioredoxin to the periplasm. This transfer involves a cascade of disulfide bond formation and reduction steps. The chain is Thiol:disulfide interchange protein DsbD from Shigella flexneri serotype 5b (strain 8401).